The primary structure comprises 192 residues: uncharacterized protein (192 aa).

A helical; Signal-anchor membrane pass occupies residues 7-29; sequence FIHSISGGSSLLSASEVFASAFF. A helical transmembrane segment spans residues 51 to 67; the sequence is YFLCVLVSTFLNSLVII.

It localises to the membrane. This is an uncharacterized protein from Saccharomyces cerevisiae (strain ATCC 204508 / S288c) (Baker's yeast).